Consider the following 701-residue polypeptide: Polyribonucleotide nucleotidyltransferase (701 aa).

Mg(2+) is bound by residues Asp480 and Asp486. The 60-residue stretch at 547-606 folds into the KH domain; it reads PKIDTIKIDVDKIKVVIGKGGETIDKIIAETGVKIDIDDEGNVSIYSSDQAAINRTKEII. In terms of domain architecture, S1 motif spans 616 to 684; it reads GEVYHAKVVR…EKGRVDASMK (69 aa). The segment at 682 to 701 is disordered; it reads SMKALIPRPPKPEKKEEKHD. Residues 691 to 701 show a composition bias toward basic and acidic residues; it reads PKPEKKEEKHD.

This sequence belongs to the polyribonucleotide nucleotidyltransferase family. It depends on Mg(2+) as a cofactor.

It localises to the cytoplasm. The catalysed reaction is RNA(n+1) + phosphate = RNA(n) + a ribonucleoside 5'-diphosphate. In terms of biological role, involved in mRNA degradation. Catalyzes the phosphorolysis of single-stranded polyribonucleotides processively in the 3'- to 5'-direction. The chain is Polyribonucleotide nucleotidyltransferase from Streptococcus pyogenes serotype M12 (strain MGAS2096).